We begin with the raw amino-acid sequence, 132 residues long: MTMTDPLSDMFSRIRNANQVLHKKVTVPSSRLKVSIADLLKREGYILDYSVIDEHPGQLLVIELKYGPDKSRALVGLKRVSKPGLRVYAKSSNLPEVFGGLGIAILSTSSGLLTCSQARKKGVGGEVLAYAW.

Belongs to the universal ribosomal protein uS8 family. In terms of assembly, part of the 30S ribosomal subunit. Contacts proteins S5 and S12.

Functionally, one of the primary rRNA binding proteins, it binds directly to 16S rRNA central domain where it helps coordinate assembly of the platform of the 30S subunit. The protein is Small ribosomal subunit protein uS8 of Tropheryma whipplei (strain Twist) (Whipple's bacillus).